Consider the following 155-residue polypeptide: DNA-directed RNA polymerase II subunit rpb4 (155 aa).

Belongs to the eukaryotic RPB4 RNA polymerase subunit family. In terms of assembly, component of the RNA polymerase II (Pol II) complex consisting of 12 subunits. RPB4 and RPB7 form a subcomplex that protrudes from the 10-subunit Pol II core complex.

It localises to the nucleus. Its function is as follows. DNA-dependent RNA polymerase catalyzes the transcription of DNA into RNA using the four ribonucleoside triphosphates as substrates. Component of RNA polymerase II which synthesizes mRNA precursors and many functional non-coding RNAs. Pol II is the central component of the basal RNA polymerase II transcription machinery. It is composed of mobile elements that move relative to each other. RPB4 is part of a subcomplex with RPB7 that binds to a pocket formed by RPB1, RPB2 and RPB6 at the base of the clamp element. The RPB4-RPB7 subcomplex seems to lock the clamp via RPB7 in the closed conformation thus preventing double-stranded DNA to enter the active site cleft. The RPB4-RPB7 subcomplex binds single-stranded DNA and RNA. This chain is DNA-directed RNA polymerase II subunit rpb4 (polr2d), found in Dictyostelium discoideum (Social amoeba).